Reading from the N-terminus, the 118-residue chain is MIKGIGLDMIDLERVKQVVEKNPRFIERVLTEKEIKQFEKYEGNRKIEFLAGRFAAKEAYAKANGTGFGKHLSFTDVEILQVEDGRPHVTLPANAGENVFVSITHTARSAAAQVIIEI.

2 residues coordinate Mg(2+): aspartate 8 and glutamate 58.

This sequence belongs to the P-Pant transferase superfamily. AcpS family. Requires Mg(2+) as cofactor.

Its subcellular location is the cytoplasm. It carries out the reaction apo-[ACP] + CoA = holo-[ACP] + adenosine 3',5'-bisphosphate + H(+). Functionally, transfers the 4'-phosphopantetheine moiety from coenzyme A to a Ser of acyl-carrier-protein. This is Holo-[acyl-carrier-protein] synthase from Listeria monocytogenes serotype 4a (strain HCC23).